Reading from the N-terminus, the 137-residue chain is Small ribosomal subunit protein uS9 (137 aa).

Positions 104-137 are disordered; that stretch reads PLKSEGYLTRDPRAKERKKYGLHKARKAPQYSKR. Positions 118–137 are enriched in basic residues; that stretch reads KERKKYGLHKARKAPQYSKR.

It belongs to the universal ribosomal protein uS9 family.

In Gloeothece citriformis (strain PCC 7424) (Cyanothece sp. (strain PCC 7424)), this protein is Small ribosomal subunit protein uS9.